Reading from the N-terminus, the 357-residue chain is Probable cinnamyl alcohol dehydrogenase 2 (357 aa).

Cys-47 serves as a coordination point for Zn(2+). Residue Ser-49 coordinates NADP(+). The Zn(2+) site is built by His-69, Glu-70, Cys-100, Cys-103, Cys-106, Cys-114, and Cys-163. Residues Thr-167, Gly-188–Gly-193, Ser-211–Lys-216, Thr-251, Gly-275, and Ser-298–Ile-300 contribute to the NADP(+) site.

This sequence belongs to the zinc-containing alcohol dehydrogenase family. Homodimer. The cofactor is Zn(2+).

It catalyses the reaction (E)-cinnamyl alcohol + NADP(+) = (E)-cinnamaldehyde + NADPH + H(+). It carries out the reaction (E)-coniferol + NADP(+) = (E)-coniferaldehyde + NADPH + H(+). The enzyme catalyses (E)-sinapyl alcohol + NADP(+) = (E)-sinapaldehyde + NADPH + H(+). The catalysed reaction is (E)-4-coumaroyl alcohol + NADP(+) = (E)-4-coumaraldehyde + NADPH + H(+). It catalyses the reaction (E)-caffeyl alcohol + NADP(+) = (E)-caffeyl aldehyde + NADPH + H(+). Its pathway is aromatic compound metabolism; phenylpropanoid biosynthesis. Its function is as follows. Involved in lignin biosynthesis. Catalyzes the final step specific for the production of lignin monomers. Catalyzes the NADPH-dependent reduction of coniferaldehyde, 5-hydroxyconiferaldehyde, sinapaldehyde, 4-coumaraldehyde and caffeyl aldehyde to their respective alcohols. The polypeptide is Probable cinnamyl alcohol dehydrogenase 2 (CAD2) (Picea abies (Norway spruce)).